Here is a 488-residue protein sequence, read N- to C-terminus: Probable cytochrome P450 6u1 (488 aa).

Cys-430 lines the heme pocket.

The protein belongs to the cytochrome P450 family. Heme serves as cofactor.

The protein localises to the endoplasmic reticulum membrane. It localises to the microsome membrane. In terms of biological role, may be involved in the metabolism of insect hormones and in the breakdown of synthetic insecticides. The polypeptide is Probable cytochrome P450 6u1 (Cyp6u1) (Drosophila melanogaster (Fruit fly)).